The sequence spans 125 residues: Small ribosomal subunit protein uS12c (125 aa).

Residues 104–125 (ASGVKDRKQGRSKYGGKRPKGD) are disordered. Residues 113–125 (GRSKYGGKRPKGD) show a composition bias toward basic residues.

Belongs to the universal ribosomal protein uS12 family. Part of the 30S ribosomal subunit.

The protein resides in the plastid. The protein localises to the chloroplast. Functionally, with S4 and S5 plays an important role in translational accuracy. Located at the interface of the 30S and 50S subunits. The chain is Small ribosomal subunit protein uS12c (rps12) from Emiliania huxleyi (Coccolithophore).